The chain runs to 295 residues: Ankyrin repeat and SOCS box protein 17 (295 aa).

An ANK repeat occupies 146–176; the sequence is SGITPLLYVAQTRQSNILKILLQYGILEREK. An SOCS box domain is found at 243–295; that stretch reads DYIPPTRYKDPCELVHLCRITIRTQLLANNMLPNGIFSLLIPTRLQNFLNLES.

Belongs to the ankyrin SOCS box (ASB) family. As to expression, specifically expressed in testis. Localizes to spermatogenic cells in testis, with highest expression in round spermatids and condensing spermatids and lower expression in pachytene spermatocytes.

The protein operates within protein modification; protein ubiquitination. May be a substrate-recognition component of a SCF-like ECS (Elongin-Cullin-SOCS-box protein) E3 ubiquitin-protein ligase complex which mediates the ubiquitination and subsequent proteasomal degradation of target proteins. The sequence is that of Ankyrin repeat and SOCS box protein 17 (Asb17) from Mus musculus (Mouse).